Consider the following 156-residue polypeptide: Small ribosomal subunit protein uS7 (156 aa).

It belongs to the universal ribosomal protein uS7 family. Part of the 30S ribosomal subunit. Contacts proteins S9 and S11.

Functionally, one of the primary rRNA binding proteins, it binds directly to 16S rRNA where it nucleates assembly of the head domain of the 30S subunit. Is located at the subunit interface close to the decoding center, probably blocks exit of the E-site tRNA. The chain is Small ribosomal subunit protein uS7 from Mesomycoplasma hyopneumoniae (strain 232) (Mycoplasma hyopneumoniae).